The sequence spans 327 residues: Beta-1,4-galactosyltransferase 7 (327 aa).

The Cytoplasmic segment spans residues 1-30; the sequence is MLPSRRKAAQLPWEDGRARLLPGGLRRKCS. A helical; Signal-anchor for type II membrane protein transmembrane segment spans residues 31-51; sequence IFHLFIAFLLLVFFSLLWLQL. The Lumenal segment spans residues 52–327; the sequence is SCSGDMAQVT…KTATPWCIFG (276 aa). A disordered region spans residues 61–88; it reads TRGQGQETSGPPRACPPEPPPEHWEEDE. UDP-alpha-D-galactose-binding positions include 100–104 and 139–141; these read PFRER and FNR. N-linked (GlcNAc...) asparagine glycosylation occurs at Asn154. UDP-alpha-D-galactose is bound by residues 164-165, Tyr194, and Trp224; that span reads VD. Asp165 contributes to the Mn(2+) binding site. 226 to 229 serves as a coordination point for N-acetyl-D-glucosamine; the sequence is REDD. His257 is a Mn(2+) binding site. Residues 257–259 and Arg266 each bind UDP-alpha-D-galactose; that span reads HLH.

Belongs to the glycosyltransferase 7 family. Mn(2+) is required as a cofactor.

The protein resides in the golgi apparatus. It is found in the golgi stack membrane. The catalysed reaction is 3-O-(beta-D-xylosyl)-L-seryl-[protein] + UDP-alpha-D-galactose = 3-O-(beta-D-galactosyl-(1-&gt;4)-beta-D-xylosyl)-L-seryl-[protein] + UDP + H(+). It participates in protein modification; protein glycosylation. Required for the biosynthesis of the tetrasaccharide linkage region of proteoglycans, especially for small proteoglycans in skin fibroblasts. This chain is Beta-1,4-galactosyltransferase 7 (B4galt7), found in Mus musculus (Mouse).